A 301-amino-acid chain; its full sequence is NADH-cytochrome b5 reductase 3 (301 aa).

Residue Gly-2 is the site of N-myristoyl glycine attachment. The region spanning Asp-40–Gln-152 is the FAD-binding FR-type domain. Lys-42 bears the N6-acetyllysine mark. Tyr-43 bears the Phosphotyrosine mark. Lys-50 is subject to N6-acetyllysine. The FAD site is built by Arg-92, Pro-93, Tyr-94, Val-109, Lys-111, and Phe-114. At Lys-120 the chain carries N6-acetyllysine. The FAD site is built by Lys-126, Met-127, Ser-128, and Thr-185.

The protein belongs to the flavoprotein pyridine nucleotide cytochrome reductase family. Component of a complex composed of cytochrome b5, NADH-cytochrome b5 reductase (CYB5R3) and MTARC2. Interacts with MTLN; the interaction is required to maintain cellular lipid composition and leads to stimulation of mitochondrial respiratory complex I activity. The cofactor is FAD. Post-translationally, myristoylated. In terms of tissue distribution, ubiquitously expressed. As to expression, expressed only in erythroid tissues, reticulocytes and liver.

The protein resides in the endoplasmic reticulum membrane. It localises to the mitochondrion outer membrane. It is found in the cytoplasm. It carries out the reaction 2 Fe(III)-[cytochrome b5] + NADH = 2 Fe(II)-[cytochrome b5] + NAD(+) + H(+). Catalyzes the reduction of two molecules of cytochrome b5 using NADH as the electron donor. The chain is NADH-cytochrome b5 reductase 3 from Rattus norvegicus (Rat).